A 612-amino-acid chain; its full sequence is Zinc metalloproteinase-disintegrin-like 8 (612 aa).

A signal peptide spans 1-20 (MIQVLLVTICLAVFPYQGSS). The propeptide occupies 21–189 (IILGSGNVND…KKASQLNLTP (169 aa)). A Peptidase M12B domain is found at 199–395 (KYIELVIVAD…NRPPCILNKP (197 aa)). Glu-202 lines the Ca(2+) pocket. Asn-218 carries an N-linked (GlcNAc...) asparagine glycan. Asp-286 serves as a coordination point for Ca(2+). Intrachain disulfides connect Cys-310–Cys-390, Cys-350–Cys-374, and Cys-352–Cys-357. His-335 contributes to the Zn(2+) binding site. The active site involves Glu-336. Zn(2+) contacts are provided by His-339 and His-345. The Ca(2+) site is built by Cys-390, Asn-393, Val-405, Asn-408, Phe-410, Glu-412, Glu-415, and Asp-418. One can recognise a Disintegrin domain in the interval 403–489 (PPVCGNYFVE…DCPTDDFQRN (87 aa)). Intrachain disulfides connect Cys-406-Cys-435, Cys-417-Cys-430, Cys-419-Cys-425, Cys-429-Cys-452, Cys-443-Cys-449, Cys-448-Cys-474, Cys-461-Cys-481, Cys-468-Cys-500, Cys-493-Cys-505, Cys-512-Cys-562, Cys-527-Cys-573, Cys-540-Cys-550, Cys-557-Cys-599, and Cys-593-Cys-605. Residues 467–469 (ECD) carry the D/ECD-tripeptide motif. Asn-502 carries an N-linked (GlcNAc...) asparagine glycan.

Belongs to the venom metalloproteinase (M12B) family. P-III subfamily. The cofactor is Zn(2+). In terms of tissue distribution, expressed by the venom gland.

The protein resides in the secreted. Snake venom metalloproteinase that impairs hemostasis in the envenomed animal. In Crotalus adamanteus (Eastern diamondback rattlesnake), this protein is Zinc metalloproteinase-disintegrin-like 8.